The following is a 576-amino-acid chain: Putative export ATP-binding/permease protein RP696 (576 aa).

The region spanning 20 to 303 is the ABC transmembrane type-1 domain; the sequence is LIIVMISLLS…IFELLSEMHL (284 aa). A run of 6 helical transmembrane segments spans residues 21-41, 61-81, 135-155, 158-178, 242-262, and 277-297; these read IIVM…GSIF, ILYI…RSYF, FLSF…LMFF, FKLA…LIKF, ALFF…IVWI, and IISF…IFEL. The ABC transporter domain occupies 336 to 572; that stretch reads IEFKNVDFTY…SEIYRNICRE (237 aa). 371–378 provides a ligand contact to ATP; it reads GRSGAGKS.

It belongs to the ABC transporter superfamily. As to quaternary structure, homodimer.

It is found in the cell inner membrane. Functionally, part of an ABC transporter complex. Transmembrane domains (TMD) form a pore in the inner membrane and the ATP-binding domain (NBD) is responsible for energy generation. In Rickettsia prowazekii (strain Madrid E), this protein is Putative export ATP-binding/permease protein RP696.